The primary structure comprises 392 residues: Phosphoglycerate kinase (392 aa).

Substrate contacts are provided by residues 21–23 (DLN), arginine 36, 59–62 (HLGR), arginine 114, and arginine 147. ATP contacts are provided by residues lysine 198, glutamate 320, and 346 to 349 (GGDT).

The protein belongs to the phosphoglycerate kinase family. As to quaternary structure, monomer.

The protein localises to the cytoplasm. It carries out the reaction (2R)-3-phosphoglycerate + ATP = (2R)-3-phospho-glyceroyl phosphate + ADP. The protein operates within carbohydrate degradation; glycolysis; pyruvate from D-glyceraldehyde 3-phosphate: step 2/5. The protein is Phosphoglycerate kinase of Nitrosomonas europaea (strain ATCC 19718 / CIP 103999 / KCTC 2705 / NBRC 14298).